The sequence spans 127 residues: DNA-directed RNA polymerases I, II, and III subunit RPABC2 (127 aa).

Positions 1-34 are enriched in acidic residues; sequence MSDNEDNFDGDDFDDVEEDEGLDDLENAEEEGQE. A disordered region spans residues 1 to 53; that stretch reads MSDNEDNFDGDDFDDVEEDEGLDDLENAEEEGQENVEILPSGERPQANQKRIT. The residue at position 2 (serine 2) is an N-acetylserine. Serine 2 is modified (phosphoserine; by CK2).

Belongs to the archaeal Rpo6/eukaryotic RPB6 RNA polymerase subunit family. Component of the RNA polymerase I (Pol I), RNA polymerase II (Pol II) and RNA polymerase III (Pol III) complexes consisting of at least 13, 12 and 17 subunits, respectively. Pol I complex consists of a ten-subunit catalytic core composed of POLR1A/RPA1, POLR1B/RPA2, POLR1C/RPAC1, POLR1D/RPAC2, POLR1H/RPA12, POLR2E/RPABC1, POLR2F/RPABC2, POLR2H/RPABC3, POLR2K/RPABC4 and POLR2L/RPABC5; a mobile stalk subunit POLR1F/RPA43 protruding from the core and additional subunits homologous to general transcription factors POLR1E/RPA49 and POLR1G/RPA34. Part of Pol I pre-initiation complex (PIC), in which Pol I core assembles with RRN3 and promoter-bound UTBF and SL1/TIF-IB complex. Pol II complex contains a ten-subunit catalytic core composed of POLR2A/RPB1, POLR2B/RPB2, POLR2C/RPB3, POLR2I/RPB9, POLR2J/RPB11, POLR2E/RPABC1, POLR2F/RPABC2, POLR2H/RPABC3, POLR2K/RPABC4 and POLR2L/RPABC5 and a mobile stalk composed of two subunits POLR2D/RPB4 and POLR2G/RPB7. Part of Pol II(G) complex, in which Pol II core associates with an additional subunit POLR2M; unlike conventional Pol II, Pol II(G) functions as a transcriptional repressor. Part of TBP-based Pol II pre-initiation complex (PIC), in which Pol II core assembles with general transcription factors and other specific initiation factors including GTF2E1, GTF2E2, GTF2F1, GTF2F2, TCEA1, ERCC2, ERCC3, GTF2H2, GTF2H3, GTF2H4, GTF2H5, GTF2A1, GTF2A2, GTF2B and TBP; this large multi-subunit PIC complex mediates DNA unwinding and targets Pol II core to the transcription start site where the first phosphodiester bond forms. Pol III complex consists of a ten-subunit catalytic core composed of POLR3A/RPC1, POLR3B/RPC2, POLR1C/RPAC1, POLR1D/RPAC2, POLR3K/RPC10, POLR2E/RPABC1, POLR2F/RPABC2, POLR2H/RPABC3, POLR2K/RPABC4 and POLR2L/RPABC5; a mobile stalk composed of two subunits POLR3H/RPC8 and CRCP/RPC9, protruding from the core and functioning primarily in transcription initiation; and additional subunits homologous to general transcription factors of the RNA polymerase II machinery, POLR3C/RPC3-POLR3F/RPC6-POLR3G/RPC7 heterotrimer required for transcription initiation and POLR3D/RPC4-POLR3E/RPC5 heterodimer involved in both transcription initiation and termination.

It is found in the nucleus. The protein localises to the nucleolus. Its function is as follows. DNA-dependent RNA polymerase catalyzes the transcription of DNA into RNA using the four ribonucleoside triphosphates as substrates. Common component of RNA polymerases I, II, and III which synthesize ribosomal RNA precursors, mRNA precursors and many functional non-coding RNAs, and small RNAs, such as 5S rRNA and tRNAs, respectively. Pol II is the central component of the basal RNA polymerase II transcription machinery. Pols are composed of mobile elements that move relative to each other. In Pol II, POLR2F/RPABC2 is part of the clamp element and together with parts of POLR2A/RPB1 and POLR2B/RPB2 forms a pocket to which the POLR2D/RPB4-POLR2G/RPB7 subcomplex binds. This chain is DNA-directed RNA polymerases I, II, and III subunit RPABC2, found in Homo sapiens (Human).